The following is a 588-amino-acid chain: Arginine--tRNA ligase (588 aa).

The 'HIGH' region motif lies at 124–134 (PNVAKPMHVGH).

Belongs to the class-I aminoacyl-tRNA synthetase family. In terms of assembly, monomer.

The protein localises to the cytoplasm. It catalyses the reaction tRNA(Arg) + L-arginine + ATP = L-arginyl-tRNA(Arg) + AMP + diphosphate. This Maricaulis maris (strain MCS10) (Caulobacter maris) protein is Arginine--tRNA ligase.